A 278-amino-acid chain; its full sequence is Rhomboid protease GlpG (278 aa).

The next 6 helical transmembrane spans lie at 94–114 (AGPL…LMLI), 143–163 (AFLH…WYLG), 175–195 (LLVL…LFSG), 196–216 (ANFG…WLTG), 224–241 (ISLP…LIAG), and 245–267 (ILGL…LMAF). Ser-202 serves as the catalytic Nucleophile. His-255 is an active-site residue.

The protein belongs to the peptidase S54 family.

The protein localises to the cell inner membrane. It carries out the reaction Cleaves type-1 transmembrane domains using a catalytic dyad composed of serine and histidine that are contributed by different transmembrane domains.. Functionally, rhomboid-type serine protease that catalyzes intramembrane proteolysis. This is Rhomboid protease GlpG from Yersinia pseudotuberculosis serotype I (strain IP32953).